The sequence spans 87 residues: Envelope glycoprotein N (87 aa).

The first 24 residues, 1 to 24, serve as a signal peptide directing secretion; sequence MGSITASFILITMQILFFCEDSSG. Topologically, residues 25–48 are virion surface; the sequence is EPNFAERNFWHASCSARGVYIDGS. The helical transmembrane segment at 49–69 threads the bilayer; that stretch reads MITTLFFYASLLGVCVALISL. Residues 70–87 lie on the Intravirion side of the membrane; sequence AYHACFRLFTRSVLRSTW.

This sequence belongs to the herpesviridae glycoprotein N family. In terms of assembly, interacts (via N-terminus) with gM (via N-terminus). The gM-gN heterodimer forms the gCII complex.

The protein resides in the virion membrane. It is found in the host membrane. Its subcellular location is the host Golgi apparatus. It localises to the host trans-Golgi network. In terms of biological role, envelope glycoprotein necessary for proper maturation of gM and modulation of its membrane fusion activity. Also plays a critical role in virion morphogenesis. This chain is Envelope glycoprotein N, found in Varicella-zoster virus (strain Dumas) (HHV-3).